The chain runs to 518 residues: Integrator complex subunit 14 (518 aa).

In terms of domain architecture, VWFA spans 2–204 (PTVVVMDVSL…KNVQSMFGKL (203 aa)). Residues Ser10, Ser12, and Thr86 each contribute to the Mg(2+) site. Residues 373-394 (SDAKENPYGDDDNKSPFPLQPK) form a disordered region. The span at 374–386 (DAKENPYGDDDNK) shows a compositional bias: basic and acidic residues.

This sequence belongs to the Integrator subunit 14 family. In terms of assembly, component of the Integrator complex, composed of core subunits INTS1, INTS2, INTS3, INTS4, INTS5, INTS6, INTS7, INTS8, INTS9/RC74, INTS10, INTS11/CPSF3L, INTS12, INTS13, INTS14 and INTS15. The core complex associates with protein phosphatase 2A subunits PPP2CA and PPP2R1A, to form the Integrator-PP2A (INTAC) complex. INTS14 is part of the tail subcomplex, composed of INTS10, INTS13, INTS14 and INTS15.

The protein resides in the nucleus. Functionally, component of the integrator complex, a multiprotein complex that terminates RNA polymerase II (Pol II) transcription in the promoter-proximal region of genes. The integrator complex provides a quality checkpoint during transcription elongation by driving premature transcription termination of transcripts that are unfavorably configured for transcriptional elongation: the complex terminates transcription by (1) catalyzing dephosphorylation of the C-terminal domain (CTD) of Pol II subunit POLR2A/RPB1 and SUPT5H/SPT5, (2) degrading the exiting nascent RNA transcript via endonuclease activity and (3) promoting the release of Pol II from bound DNA. The integrator complex is also involved in terminating the synthesis of non-coding Pol II transcripts, such as enhancer RNAs (eRNAs), small nuclear RNAs (snRNAs), telomerase RNAs and long non-coding RNAs (lncRNAs). Within the integrator complex, INTS14 is part of the integrator tail module that acts as a platform for the recruitment of transcription factors at promoters. The sequence is that of Integrator complex subunit 14 from Gallus gallus (Chicken).